Reading from the N-terminus, the 229-residue chain is MTNAAQLTALLHLASPALPVGAFSYSQGLEAAVDVRRVADEASAAAWIAEGLDVLAACEAPLWLLQFADWQAGRFDAVAERDAWFLATRETRELRLETSQMGWSLNRLIQQMAWGDDALRSALAACASVTFPTAFAAAAAALNVDPRDGVTAYCFAWVENQMAAAVKAVPLGQAAGQRILFGLHAAVARAVEEATRRAACHPPELSTFSPGLGVLSARHETQYSRLFRS.

Belongs to the UreF family. In terms of assembly, ureD, UreF and UreG form a complex that acts as a GTP-hydrolysis-dependent molecular chaperone, activating the urease apoprotein by helping to assemble the nickel containing metallocenter of UreC. The UreE protein probably delivers the nickel.

The protein resides in the cytoplasm. In terms of biological role, required for maturation of urease via the functional incorporation of the urease nickel metallocenter. This is Urease accessory protein UreF from Ralstonia pickettii (strain 12J).